Here is a 298-residue protein sequence, read N- to C-terminus: 4-hydroxy-tetrahydrodipicolinate synthase (298 aa).

Residue Thr51 participates in pyruvate binding. Tyr139 (proton donor/acceptor) is an active-site residue. The active-site Schiff-base intermediate with substrate is Lys167. Position 209 (Ile209) interacts with pyruvate.

The protein belongs to the DapA family. In terms of assembly, homotetramer; dimer of dimers.

The protein localises to the cytoplasm. The enzyme catalyses L-aspartate 4-semialdehyde + pyruvate = (2S,4S)-4-hydroxy-2,3,4,5-tetrahydrodipicolinate + H2O + H(+). The protein operates within amino-acid biosynthesis; L-lysine biosynthesis via DAP pathway; (S)-tetrahydrodipicolinate from L-aspartate: step 3/4. Catalyzes the condensation of (S)-aspartate-beta-semialdehyde [(S)-ASA] and pyruvate to 4-hydroxy-tetrahydrodipicolinate (HTPA). The polypeptide is 4-hydroxy-tetrahydrodipicolinate synthase (Pasteurella multocida (strain Pm70)).